The chain runs to 172 residues: L-amino acid oxidase (172 aa).

44–47 (GPMR) lines the FAD pocket. Substrate contacts are provided by R47 and H103.

Belongs to the flavin monoamine oxidase family. FIG1 subfamily. In terms of assembly, heterodimer; non-covalently linked. The cofactor is FAD. Post-translationally, N-glycosylated. In terms of tissue distribution, expressed by the venom gland.

It is found in the secreted. It carries out the reaction an L-alpha-amino acid + O2 + H2O = a 2-oxocarboxylate + H2O2 + NH4(+). The enzyme catalyses L-leucine + O2 + H2O = 4-methyl-2-oxopentanoate + H2O2 + NH4(+). The catalysed reaction is L-phenylalanine + O2 + H2O = 3-phenylpyruvate + H2O2 + NH4(+). It catalyses the reaction L-tryptophan + O2 + H2O = indole-3-pyruvate + H2O2 + NH4(+). It carries out the reaction L-methionine + O2 + H2O = 4-methylsulfanyl-2-oxobutanoate + H2O2 + NH4(+). The enzyme catalyses L-isoleucine + O2 + H2O = (S)-3-methyl-2-oxopentanoate + H2O2 + NH4(+). The catalysed reaction is L-arginine + O2 + H2O = 5-guanidino-2-oxopentanoate + H2O2 + NH4(+). It catalyses the reaction L-tyrosine + O2 + H2O = 3-(4-hydroxyphenyl)pyruvate + H2O2 + NH4(+). With respect to regulation, activity is increased by Mn(2+) ions. Inhibited by Zn(2+), Ni(2+), Co(2+), Cu(2+) and Al(3+). No significant activity change by Na(+), K(+), Ca(2+), Mg(2+) and Ba(2+) ions. Both isoform are completely inhibited by L-Cys and reduced glutathione. O-phenanthroline, beta-mercaptoethanol and PMSF completely inhibit the enzymatic activity of LAAOII, but have no activity on LAAOI. Iodoacetic acid inhibits the enzymatic activity of LAAOII by 46% but has no effect on the LAAOI activity. Its function is as follows. Catalyzes an oxidative deamination of predominantly hydrophobic and aromatic L-amino acids, thus producing hydrogen peroxide that may contribute to the diverse toxic effects of this enzyme. Shows high specificity for L-Arg, L-Met, L-Phe, L-Leu, L-Tyr, L-Ile and L-Trp, low specificity for L-Val, L-Ala, L-Asn, L-Gln, and no specificity for L-Pro, L-Ser, L-Thr, L-Cys, L-Gly and L-Asp. Exhibits diverse biological activities, such as hemorrhage, hemolysis, edema, antibacterial and antiparasitic activities, as well as regulation of platelet aggregation. Its effect on platelets is controversial, since it either induces aggregation or inhibits agonist-induced aggregation. These different effects are probably due to different experimental conditions. In Cerastes cerastes (Horned desert viper), this protein is L-amino acid oxidase.